Consider the following 92-residue polypeptide: Toxin RelE3 (92 aa).

It belongs to the RelE toxin family.

Functionally, toxic component of a type II toxin-antitoxin (TA) system. Its toxic effect is neutralized by coexpression with cognate antitoxin RelB3 but no other ParD or RelB antitoxin. The protein is Toxin RelE3 (relE3) of Caulobacter vibrioides (strain ATCC 19089 / CIP 103742 / CB 15) (Caulobacter crescentus).